A 206-amino-acid polypeptide reads, in one-letter code: ATP phosphoribosyltransferase (206 aa).

The protein belongs to the ATP phosphoribosyltransferase family. Short subfamily. As to quaternary structure, heteromultimer composed of HisG and HisZ subunits.

The protein localises to the cytoplasm. It catalyses the reaction 1-(5-phospho-beta-D-ribosyl)-ATP + diphosphate = 5-phospho-alpha-D-ribose 1-diphosphate + ATP. Its pathway is amino-acid biosynthesis; L-histidine biosynthesis; L-histidine from 5-phospho-alpha-D-ribose 1-diphosphate: step 1/9. Catalyzes the condensation of ATP and 5-phosphoribose 1-diphosphate to form N'-(5'-phosphoribosyl)-ATP (PR-ATP). Has a crucial role in the pathway because the rate of histidine biosynthesis seems to be controlled primarily by regulation of HisG enzymatic activity. This Brachyspira hyodysenteriae (strain ATCC 49526 / WA1) protein is ATP phosphoribosyltransferase.